The following is a 149-amino-acid chain: Hut operon positive regulatory protein (149 aa).

Belongs to the HutP family. As to quaternary structure, homohexamer.

In terms of biological role, antiterminator that binds to cis-acting regulatory sequences on the mRNA in the presence of histidine, thereby suppressing transcription termination and activating the hut operon for histidine utilization. The chain is Hut operon positive regulatory protein from Geobacillus sp. (strain WCH70).